The primary structure comprises 235 residues: Small ribosomal subunit protein uS2 (235 aa).

It belongs to the universal ribosomal protein uS2 family.

This Geobacillus thermodenitrificans (strain NG80-2) protein is Small ribosomal subunit protein uS2.